Consider the following 298-residue polypeptide: Mimecan (298 aa).

Positions 1–20 (MKTLQSTLLLLLFVPLIKPA) are cleaved as a signal peptide. A glycan (N-linked (GlcNAc...) (keratan sulfate) asparagine) is linked at Asn88. LRR repeat units lie at residues 112-131 (DAVPPLPKESAYLYARFNKI), 132-155 (KKLTAKDFADIPNLRRLDFTGNLI), 156-179 (EDIEDGTFSKLSLLEELSLAENQL), 180-199 (LKLPVLPPKLTLFNAKYNKI), 200-225 (KSRGIKANAFKKLNNLTFLYLDHNAL), 226-246 (ESVPLNLPESLRVIHLQFNNI), and 247-277 (ASITDDTFCKANDTSYIRDRIEEIRLEGNPI). N-linked (GlcNAc...) (keratan sulfate) asparagine glycosylation occurs at Asn214. Cys255 and Cys288 are oxidised to a cystine. N-linked (GlcNAc...) (keratan sulfate) asparagine glycosylation occurs at Asn258.

This sequence belongs to the small leucine-rich proteoglycan (SLRP) family. SLRP class III subfamily. In terms of processing, contains keratan sulfate.

Its subcellular location is the secreted. The protein resides in the extracellular space. It is found in the extracellular matrix. Functionally, induces bone formation in conjunction with TGF-beta-1 or TGF-beta-2. This chain is Mimecan (OGN), found in Pongo abelii (Sumatran orangutan).